Here is a 190-residue protein sequence, read N- to C-terminus: CASP-like protein 1E1 (190 aa).

Residues 1–21 (MEHESKTKMDGIEMEKGKKEN) form a disordered region. Over 1 to 28 (MEHESKTKMDGIEMEKGKKENGSRKGVE) the chain is Cytoplasmic. A helical membrane pass occupies residues 29–49 (ITMRVLALVLTMVAATVLGVA). Topologically, residues 50 to 83 (KQTEVVPIKLIPTLPPLNVATTAKASYLSAFVYN) are extracellular. The helical transmembrane segment at 84 to 104 (ICANAIACGYTAISIMIVIIS) threads the bilayer. Over 105–111 (KGRRSKC) the chain is Cytoplasmic. A helical transmembrane segment spans residues 112 to 132 (LLMAVLIGDLMMVALLCSSTG). Residues 133 to 163 (AAGAIGLMGRHGNKHVMWKKVCGVFGKFCNQ) are Extracellular-facing. A helical membrane pass occupies residues 164–184 (AAVSVAITLIASVVFMLLVVL). The Cytoplasmic portion of the chain corresponds to 185–190 (DALKLP).

Belongs to the Casparian strip membrane proteins (CASP) family. In terms of assembly, homodimer and heterodimers.

The protein localises to the cell membrane. This Arabidopsis lyrata subsp. lyrata (Lyre-leaved rock-cress) protein is CASP-like protein 1E1.